The primary structure comprises 152 residues: Large ribosomal subunit protein uL22 (152 aa).

Positions 124-143 are enriched in low complexity; that stretch reads APTKAASKKAAPAKQTTPAA. The disordered stretch occupies residues 124-152; sequence APTKAASKKAAPAKQTTPAATESKTEGAE.

It belongs to the universal ribosomal protein uL22 family. In terms of assembly, part of the 50S ribosomal subunit.

Functionally, this protein binds specifically to 23S rRNA; its binding is stimulated by other ribosomal proteins, e.g. L4, L17, and L20. It is important during the early stages of 50S assembly. It makes multiple contacts with different domains of the 23S rRNA in the assembled 50S subunit and ribosome. Its function is as follows. The globular domain of the protein is located near the polypeptide exit tunnel on the outside of the subunit, while an extended beta-hairpin is found that lines the wall of the exit tunnel in the center of the 70S ribosome. This chain is Large ribosomal subunit protein uL22, found in Salinispora arenicola (strain CNS-205).